The primary structure comprises 370 residues: Glycerophosphodiester phosphodiesterase GDPD3 (370 aa).

The 288-residue stretch at 35–322 (FVLMGHRGFG…DMVKDISEAI (288 aa)) folds into the GP-PDE domain.

The protein belongs to the glycerophosphoryl diester phosphodiesterase family. Expressed in flowers and siliques.

The catalysed reaction is a sn-glycero-3-phosphodiester + H2O = an alcohol + sn-glycerol 3-phosphate + H(+). This chain is Glycerophosphodiester phosphodiesterase GDPD3, found in Arabidopsis thaliana (Mouse-ear cress).